The following is a 219-amino-acid chain: Izumo sperm-egg fusion protein 4 (219 aa).

An N-terminal signal peptide occupies residues 1 to 15 (MALLLCLVGVTAALA). An N-linked (GlcNAc...) asparagine glycan is attached at N206.

This sequence belongs to the Izumo family.

It localises to the secreted. The sequence is that of Izumo sperm-egg fusion protein 4 (IZUMO4) from Macaca fascicularis (Crab-eating macaque).